The primary structure comprises 161 residues: Regulator of ribonuclease activity A (161 aa).

This sequence belongs to the RraA family. As to quaternary structure, homotrimer. Binds to both RNA-binding sites in the C-terminal region of Rne and to RhlB.

It is found in the cytoplasm. Its function is as follows. Globally modulates RNA abundance by binding to RNase E (Rne) and regulating its endonucleolytic activity. Can modulate Rne action in a substrate-dependent manner by altering the composition of the degradosome. Modulates RNA-binding and helicase activities of the degradosome. The protein is Regulator of ribonuclease activity A of Photobacterium profundum (strain SS9).